The sequence spans 145 residues: Alpha-amylase/trypsin inhibitor CM2 (145 aa).

A signal peptide spans 1-25 (MASKSSITHLLLAAVLVSVFAAAAA).

It belongs to the protease inhibitor I6 (cereal trypsin/alpha-amylase inhibitor) family. Developing endosperm.

It localises to the secreted. Alpha-amylase/trypsin inhibitor. It could be involved in insect defense mechanisms. This is Alpha-amylase/trypsin inhibitor CM2 from Triticum aestivum (Wheat).